The chain runs to 232 residues: 5'-methylthioadenosine/S-adenosylhomocysteine nucleosidase (232 aa).

E12 serves as the catalytic Proton acceptor. Substrate contacts are provided by residues G78, I152, and 173 to 174; that span reads ME. D197 acts as the Proton donor in catalysis.

The protein belongs to the PNP/UDP phosphorylase family. MtnN subfamily. Homodimer.

It carries out the reaction S-adenosyl-L-homocysteine + H2O = S-(5-deoxy-D-ribos-5-yl)-L-homocysteine + adenine. It catalyses the reaction S-methyl-5'-thioadenosine + H2O = 5-(methylsulfanyl)-D-ribose + adenine. The enzyme catalyses 5'-deoxyadenosine + H2O = 5-deoxy-D-ribose + adenine. The protein operates within amino-acid biosynthesis; L-methionine biosynthesis via salvage pathway; S-methyl-5-thio-alpha-D-ribose 1-phosphate from S-methyl-5'-thioadenosine (hydrolase route): step 1/2. Its function is as follows. Catalyzes the irreversible cleavage of the glycosidic bond in both 5'-methylthioadenosine (MTA) and S-adenosylhomocysteine (SAH/AdoHcy) to adenine and the corresponding thioribose, 5'-methylthioribose and S-ribosylhomocysteine, respectively. Also cleaves 5'-deoxyadenosine, a toxic by-product of radical S-adenosylmethionine (SAM) enzymes, into 5-deoxyribose and adenine. Thus, is required for in vivo function of the radical SAM enzymes biotin synthase and lipoic acid synthase, that are inhibited by 5'-deoxyadenosine accumulation. The polypeptide is 5'-methylthioadenosine/S-adenosylhomocysteine nucleosidase (Salmonella choleraesuis (strain SC-B67)).